The primary structure comprises 138 residues: MMIMKFVRLEFISYEESYDFEFMAPDDITEDKFIDDLSDAIVKSINWEYIKGYFQEEDELGMEILPNLIDCIDFKNVNVEMEKKGYKPIKYDIIVYAGAWSYFNPKKLSIIDFHETGELTKLEKAIQEKLKRLKTDIY.

This is an uncharacterized protein from Methanocaldococcus jannaschii (strain ATCC 43067 / DSM 2661 / JAL-1 / JCM 10045 / NBRC 100440) (Methanococcus jannaschii).